The chain runs to 89 residues: Cell division topological specificity factor (89 aa).

The protein belongs to the MinE family.

Prevents the cell division inhibition by proteins MinC and MinD at internal division sites while permitting inhibition at polar sites. This ensures cell division at the proper site by restricting the formation of a division septum at the midpoint of the long axis of the cell. This is Cell division topological specificity factor from Serratia proteamaculans (strain 568).